Consider the following 30-residue polypeptide: Cycloviolacin-H1 (30 aa).

The segment at residues 1–30 is a cross-link (cyclopeptide (Gly-Asn)); that stretch reads GIPCGESCVYIPCLTSAIGCSCKSKVCYRN. 3 disulfide bridges follow: cysteine 4–cysteine 20, cysteine 8–cysteine 22, and cysteine 13–cysteine 27.

Belongs to the cyclotide family. Bracelet subfamily. In terms of processing, this is a cyclic peptide.

Probably participates in a plant defense mechanism. The polypeptide is Cycloviolacin-H1 (Viola hederacea (Australian violet)).